The sequence spans 485 residues: MSSPRSNKPKIVNGPGGYILQDVPHLIDYLPDLPTYPNPLQDNPAYSVVKQYFVHADDSVPEKVVVHKDGPRGVHFRRAGPRQKVYFESDEVHACIVTCGGLCPGLNTVIREVVSSLSYMYGVKRILGIDGGYRGFYAKNTIPLNSKVVNDIHKRGGTIIGTSRGGHDTNKIVDSIQDRGINQVYIIGGDGTQRGASVIFEEIRRRRLKVAVVGIPKTIDNDIPVIDKSFGFDTAVEEAQRAINAAHVEAESNENGIGFVKLMGRYSGYIAMYATLASRDVDCCLIPESPFYLEGEGGLFEFIERRLKDHGHMVIVLAEGAGQDLMCKSMESTPMDASGNKLLKDVGLWLSQSIKDHFKKNKMVMNLKYIDPTYMIRAVPSNASDNVYCTLLAQSAVHGAMAGYTGYTSGLVNGRQTYIPFYRITETQNNVVITDRMWARLLSSTNQPSFLGPKDTSEEKKELPETPLLDDGAVDIPPVTKEVTK.

ATP is bound by residues Gly-101, 164 to 165 (RG), and 189 to 192 (GDGT). Asp-190 provides a ligand contact to Mg(2+). Residues 218–220 (TID), 263–265 (MGR), Glu-319, and 374–377 (YMIR) contribute to the substrate site. Asp-220 (proton acceptor) is an active-site residue. A disordered region spans residues 449–485 (SFLGPKDTSEEKKELPETPLLDDGAVDIPPVTKEVTK). Residues 455-464 (DTSEEKKELP) are compositionally biased toward basic and acidic residues.

Belongs to the phosphofructokinase type A (PFKA) family. PPi-dependent PFK group II subfamily. Atypical ATP-dependent clade 'X' sub-subfamily. As to quaternary structure, homotetramer. The cofactor is Mg(2+). In terms of tissue distribution, expressed in roots, leaves, stems and flowers.

It is found in the cytoplasm. The catalysed reaction is beta-D-fructose 6-phosphate + ATP = beta-D-fructose 1,6-bisphosphate + ADP + H(+). Its pathway is carbohydrate degradation; glycolysis; D-glyceraldehyde 3-phosphate and glycerone phosphate from D-glucose: step 3/4. With respect to regulation, allosterically activated by AMP. In terms of biological role, catalyzes the phosphorylation of D-fructose 6-phosphate to fructose 1,6-bisphosphate by ATP, the first committing step of glycolysis. The protein is ATP-dependent 6-phosphofructokinase 7 of Arabidopsis thaliana (Mouse-ear cress).